Here is a 173-residue protein sequence, read N- to C-terminus: Large ribosomal subunit protein uL16 (173 aa).

It belongs to the universal ribosomal protein uL16 family.

In Methanococcus aeolicus (strain ATCC BAA-1280 / DSM 17508 / OCM 812 / Nankai-3), this protein is Large ribosomal subunit protein uL16.